The chain runs to 513 residues: Histidine--tRNA ligase (513 aa).

The N-terminal 24 residues, 1 to 24, are a transit peptide targeting the mitochondrion; it reads MADKAQLQEAIKTQGEVVRKLKSE. The WHEP-TRS domain occupies 3 to 59; that stretch reads DKAQLQEAIKTQGEVVRKLKSEKASKEQIDEEVARLLQLKAQLGGDEGKHVFVLKTA. Residues 130-132, Arg157, Gln173, Asp177, Arg326, and 330-331 each bind L-histidine; these read DLT and YY.

This sequence belongs to the class-II aminoacyl-tRNA synthetase family.

It localises to the cytoplasm. Its subcellular location is the mitochondrion. It carries out the reaction tRNA(His) + L-histidine + ATP = L-histidyl-tRNA(His) + AMP + diphosphate + H(+). Functionally, catalyzes the aminoacylation of histidyl-tRNA. The polypeptide is Histidine--tRNA ligase (Danio rerio (Zebrafish)).